Consider the following 570-residue polypeptide: Adenine deaminase (570 aa).

The protein belongs to the metallo-dependent hydrolases superfamily. Adenine deaminase family. Mn(2+) serves as cofactor.

The enzyme catalyses adenine + H2O + H(+) = hypoxanthine + NH4(+). In Clostridium acetobutylicum (strain ATCC 824 / DSM 792 / JCM 1419 / IAM 19013 / LMG 5710 / NBRC 13948 / NRRL B-527 / VKM B-1787 / 2291 / W), this protein is Adenine deaminase.